A 612-amino-acid polypeptide reads, in one-letter code: Protein hinderin (612 aa).

Residue Ser20 is modified to Phosphoserine. A coiled-coil region spans residues 90–166 (LKDLCLEDKR…CQELLSLYQK (77 aa)). Ser178 is modified (phosphoserine). Residues 362–406 (IEKQLSEDRRQQLMLQKMELEIEKERLQHLLAQQETKLLLKQQQL) adopt a coiled-coil conformation. The segment covering 462 to 477 (STSFKKCPDSPNSGQN) has biased composition (polar residues). Disordered regions lie at residues 462–484 (STSFKKCPDSPNSGQNQREKKTV) and 509–598 (ETVT…RSPE). Phosphoserine is present on residues Ser471, Ser527, and Ser558. Polar residues-rich tracts occupy residues 555-568 (QSLSPNSAPKSQPH) and 575-585 (TWSTLRPTPQK).

In terms of assembly, interacts (via N- and C-terminal domains) with SMC3 (via central hinge region).

Functionally, competes with SMC1 for binding to SMC3. May affect the availability of SMC3 to engage in the formation of multimeric protein complexes. The protein is Protein hinderin (Kiaa1328) of Mus musculus (Mouse).